A 515-amino-acid polypeptide reads, in one-letter code: Protein pid-4 (515 aa).

Residues 496 to 515 (DRSPQKFKFPASGSYMKPAN) form a disordered region.

As to quaternary structure, may interact with pid-2, app-1 and prmt-5.

The protein resides in the cytoplasm. It localises to the perinuclear region. Its subcellular location is the P-body. Together with pid-5, it is involved in gene silencing mediated by a class of 21 nucleotide PIWI-interacting RNAs (piRNAs) that possess a uracil residue at the 5'-end (also called 21U-RNAs) and guide the Piwi protein prg-1 to its DNA targets for silencing. Together with pid-5, it is required for the biogenesis of secondary and tertiary 22G-siRNAs. Specifically, promotes the production of 22G-siRNAs from the 5' end of target mRNAs. Together with pid-5, plays a role in small RNA-directed transgenerational epigenetic inheritance (also called RNAe) over several generations and germline immortality. Together with pid-5, plays a role in the formation of liquid-like condensates in the cytoplasm called Z granules. This chain is Protein pid-4, found in Caenorhabditis elegans.